A 555-amino-acid chain; its full sequence is MRSKKMTHGLEKAPHRSLLYALGLTREELSRPLVGVVNSANEVVPGHIHLHTIAEAVKAGVRAAGGTPMEFPAIAVCDGLAMNHEGMRFSLPSREIIADSIEIMATAHPFDALVFIPNCDKSVPGMLMAMLRMNVPSILISGGPMMAGTGNGKAADLITVFEGVGMVRQGRMTEDELEQLSETACPGCGSCAGMFTANSMNCLSETIGLALPGNGTTPANSAARVRLAKHAGMRVMELLERDIKPRDIVTEKAVANAVAADMALGCSTNTVLHLPAVFAEAGLDLTLGIFDEVSRKTPNLCKLSPAGDQHIQDLHRAGGIPAVMAELDKAGRIHRDALTVTGRTVGENLDALGAAVRDHDVIRPMEKPYSPQGGIAILYGSLAPEGAVVKQSAVAPEMMQRTARARVFESEEAAFEAIMAQRIEKGDAIIIRYEGPKGGPGMREMLSPTAAIAGIGLGADVALITDGRFSGGTRGAAIGHVSPEAADGGPIGLVREGDMIEIDIPARKLDLLVDEAEMERRRAAFTPVVKEVTSPLLKRYSRLVTSAANGAVYKR.

D78 is a Mg(2+) binding site. Position 119 (C119) interacts with [2Fe-2S] cluster. Mg(2+) is bound by residues D120 and K121. Residue K121 is modified to N6-carboxylysine. Residue C191 participates in [2Fe-2S] cluster binding. Mg(2+) is bound at residue E444. S470 serves as the catalytic Proton acceptor.

It belongs to the IlvD/Edd family. In terms of assembly, homodimer. Requires [2Fe-2S] cluster as cofactor. Mg(2+) is required as a cofactor.

It catalyses the reaction (2R)-2,3-dihydroxy-3-methylbutanoate = 3-methyl-2-oxobutanoate + H2O. The catalysed reaction is (2R,3R)-2,3-dihydroxy-3-methylpentanoate = (S)-3-methyl-2-oxopentanoate + H2O. It participates in amino-acid biosynthesis; L-isoleucine biosynthesis; L-isoleucine from 2-oxobutanoate: step 3/4. The protein operates within amino-acid biosynthesis; L-valine biosynthesis; L-valine from pyruvate: step 3/4. In terms of biological role, functions in the biosynthesis of branched-chain amino acids. Catalyzes the dehydration of (2R,3R)-2,3-dihydroxy-3-methylpentanoate (2,3-dihydroxy-3-methylvalerate) into 2-oxo-3-methylpentanoate (2-oxo-3-methylvalerate) and of (2R)-2,3-dihydroxy-3-methylbutanoate (2,3-dihydroxyisovalerate) into 2-oxo-3-methylbutanoate (2-oxoisovalerate), the penultimate precursor to L-isoleucine and L-valine, respectively. The chain is Dihydroxy-acid dehydratase from Oleidesulfovibrio alaskensis (strain ATCC BAA-1058 / DSM 17464 / G20) (Desulfovibrio alaskensis).